The sequence spans 130 residues: Large ribosomal subunit protein uL22 (130 aa).

Belongs to the universal ribosomal protein uL22 family. As to quaternary structure, part of the 50S ribosomal subunit.

This protein binds specifically to 23S rRNA; its binding is stimulated by other ribosomal proteins, e.g. L4, L17, and L20. It is important during the early stages of 50S assembly. It makes multiple contacts with different domains of the 23S rRNA in the assembled 50S subunit and ribosome. In terms of biological role, the globular domain of the protein is located near the polypeptide exit tunnel on the outside of the subunit, while an extended beta-hairpin is found that lines the wall of the exit tunnel in the center of the 70S ribosome. The polypeptide is Large ribosomal subunit protein uL22 (Clavibacter sepedonicus (Clavibacter michiganensis subsp. sepedonicus)).